The primary structure comprises 154 residues: Nitrogen regulatory protein (154 aa).

The region spanning 6 to 150 (QILTPGRSLV…EALYQIVVDV (145 aa)) is the PTS EIIA type-2 domain. H68 serves as the catalytic Tele-phosphohistidine intermediate.

It localises to the cytoplasm. Functionally, seems to have a role in regulating nitrogen assimilation. The sequence is that of Nitrogen regulatory protein (ptsN) from Pseudomonas aeruginosa (strain ATCC 15692 / DSM 22644 / CIP 104116 / JCM 14847 / LMG 12228 / 1C / PRS 101 / PAO1).